Reading from the N-terminus, the 314-residue chain is L-lactate dehydrogenase (314 aa).

NAD(+) is bound by residues Val16, Asp37, Lys42, Tyr68, and 82 to 83 (GV). Substrate is bound by residues Gln85 and Arg91. Residues Ser104, 121–123 (ASN), and Thr146 contribute to the NAD(+) site. 123 to 126 (NPVD) contributes to the substrate binding site. 151-154 (DTTR) lines the substrate pocket. Beta-D-fructose 1,6-bisphosphate contacts are provided by Arg156 and His171. His178 (proton acceptor) is an active-site residue. At Tyr223 the chain carries Phosphotyrosine. Thr232 contributes to the substrate binding site.

This sequence belongs to the LDH/MDH superfamily. LDH family. As to quaternary structure, homotetramer.

It is found in the cytoplasm. The catalysed reaction is (S)-lactate + NAD(+) = pyruvate + NADH + H(+). It participates in fermentation; pyruvate fermentation to lactate; (S)-lactate from pyruvate: step 1/1. With respect to regulation, allosterically activated by fructose 1,6-bisphosphate (FBP). Its function is as follows. Catalyzes the conversion of lactate to pyruvate. The sequence is that of L-lactate dehydrogenase from Lactococcus lactis subsp. cremoris (strain MG1363).